The following is a 236-amino-acid chain: Leucyl/phenylalanyl-tRNA--protein transferase (236 aa).

The protein belongs to the L/F-transferase family.

It localises to the cytoplasm. It catalyses the reaction N-terminal L-lysyl-[protein] + L-leucyl-tRNA(Leu) = N-terminal L-leucyl-L-lysyl-[protein] + tRNA(Leu) + H(+). The enzyme catalyses N-terminal L-arginyl-[protein] + L-leucyl-tRNA(Leu) = N-terminal L-leucyl-L-arginyl-[protein] + tRNA(Leu) + H(+). The catalysed reaction is L-phenylalanyl-tRNA(Phe) + an N-terminal L-alpha-aminoacyl-[protein] = an N-terminal L-phenylalanyl-L-alpha-aminoacyl-[protein] + tRNA(Phe). Functionally, functions in the N-end rule pathway of protein degradation where it conjugates Leu, Phe and, less efficiently, Met from aminoacyl-tRNAs to the N-termini of proteins containing an N-terminal arginine or lysine. This Shewanella sp. (strain MR-7) protein is Leucyl/phenylalanyl-tRNA--protein transferase.